Consider the following 887-residue polypeptide: Alanine--tRNA ligase (887 aa).

Over residues 425 to 441 (MQEQKSRARSDRREKQQ) the composition is skewed to basic and acidic residues. Positions 425-448 (MQEQKSRARSDRREKQQTGDGAGS) are disordered. Zn(2+) contacts are provided by His-569, His-573, Cys-672, and His-676.

Belongs to the class-II aminoacyl-tRNA synthetase family. It depends on Zn(2+) as a cofactor.

The protein localises to the cytoplasm. It carries out the reaction tRNA(Ala) + L-alanine + ATP = L-alanyl-tRNA(Ala) + AMP + diphosphate. In terms of biological role, catalyzes the attachment of alanine to tRNA(Ala) in a two-step reaction: alanine is first activated by ATP to form Ala-AMP and then transferred to the acceptor end of tRNA(Ala). Also edits incorrectly charged Ser-tRNA(Ala) and Gly-tRNA(Ala) via its editing domain. The chain is Alanine--tRNA ligase from Chlorobium luteolum (strain DSM 273 / BCRC 81028 / 2530) (Pelodictyon luteolum).